The following is a 490-amino-acid chain: Cytochrome P450 71A25 (490 aa).

The helical transmembrane segment at 1 to 21 (MMMMIILLWSIIFMTILFLKK) threads the bilayer. Cys-431 provides a ligand contact to heme.

This sequence belongs to the cytochrome P450 family. It depends on heme as a cofactor.

The protein resides in the membrane. This is Cytochrome P450 71A25 (CYP71A25) from Arabidopsis thaliana (Mouse-ear cress).